Consider the following 66-residue polypeptide: UPF0337 protein RPA4217 (66 aa).

The protein belongs to the UPF0337 (CsbD) family.

The protein is UPF0337 protein RPA4217 of Rhodopseudomonas palustris (strain ATCC BAA-98 / CGA009).